We begin with the raw amino-acid sequence, 481 residues long: Matrix metalloproteinase-20 (481 aa).

A signal peptide spans 1–20 (MLPASGLAVLLVTALKFSTA). A propeptide spanning residues 21-105 (APSLPAASPR…PRCGVPDVAN (85 aa)) is cleaved from the precursor. N-linked (GlcNAc...) asparagine glycosylation occurs at Asn-64. A Cysteine switch motif is present at residues 96-103 (PRCGVPDV). Cys-98 contacts Zn(2+). Residues Glu-162, Ala-163, and Asp-164 each contribute to the Ca(2+) site. Zn(2+)-binding residues include His-174 and Asp-176. Asp-181, Gly-182, Arg-184, and Thr-186 together coordinate Ca(2+). A Zn(2+)-binding site is contributed by His-189. Ca(2+) contacts are provided by Glu-195, Gly-196, Gly-198, and Asp-200. A Zn(2+)-binding site is contributed by His-202. Ca(2+)-binding residues include Asp-204 and Glu-207. Residue His-224 coordinates Zn(2+). Glu-225 is an active-site residue. Positions 228 and 234 each coordinate Zn(2+). 4 Hemopexin repeats span residues 291–341 (PDLC…FPQL), 342–387 (MSNV…GFPR), 389–437 (VQRI…FSGV), and 438–481 (NGQI…WIGC). Cys-294 and Cys-481 form a disulfide bridge. An N-linked (GlcNAc...) asparagine glycan is attached at Asn-297.

Belongs to the peptidase M10A family. It depends on Zn(2+) as a cofactor. Ca(2+) is required as a cofactor. Post-translationally, autoactivates at least at the 105-Asn-|-Tyr-106 site. In terms of tissue distribution, expressed in the enamel organ.

It localises to the secreted. Its subcellular location is the extracellular space. It is found in the extracellular matrix. Functionally, degrades amelogenin, the major protein component of the enamel matrix and two of the macromolecules characterizing the cartilage extracellular matrix: aggrecan and the cartilage oligomeric matrix protein (COMP). May play a central role in tooth enamel formation. Cleaves aggrecan at the '360-Ser-|-Phe-361' site. The polypeptide is Matrix metalloproteinase-20 (MMP20) (Bos taurus (Bovine)).